We begin with the raw amino-acid sequence, 404 residues long: Cysteine desulfurase IscS (404 aa).

Pyridoxal 5'-phosphate contacts are provided by residues 75–76 (AT), N155, Q183, and 203–205 (SGH). K206 carries the N6-(pyridoxal phosphate)lysine modification. T243 contacts pyridoxal 5'-phosphate. C328 serves as the catalytic Cysteine persulfide intermediate. C328 is a binding site for [2Fe-2S] cluster.

Belongs to the class-V pyridoxal-phosphate-dependent aminotransferase family. NifS/IscS subfamily. In terms of assembly, homodimer. Forms a heterotetramer with IscU, interacts with other sulfur acceptors. The cofactor is pyridoxal 5'-phosphate.

It is found in the cytoplasm. The enzyme catalyses (sulfur carrier)-H + L-cysteine = (sulfur carrier)-SH + L-alanine. The protein operates within cofactor biosynthesis; iron-sulfur cluster biosynthesis. In terms of biological role, master enzyme that delivers sulfur to a number of partners involved in Fe-S cluster assembly, tRNA modification or cofactor biosynthesis. Catalyzes the removal of elemental sulfur atoms from cysteine to produce alanine. Functions as a sulfur delivery protein for Fe-S cluster synthesis onto IscU, an Fe-S scaffold assembly protein, as well as other S acceptor proteins. The chain is Cysteine desulfurase IscS from Edwardsiella ictaluri (strain 93-146).